Here is a 217-residue protein sequence, read N- to C-terminus: Nuclear transcription factor Y subunit C-3 (217 aa).

Polar residues predominate over residues methionine 1–glycine 28. Disordered stretches follow at residues methionine 1–serine 29 and proline 198–asparagine 217.

It belongs to the NFYC/HAP5 subunit family. In terms of assembly, heterotrimeric transcription factor composed of three components, NF-YA, NF-YB and NF-YC. NF-YB and NF-YC must interact and dimerize for NF-YA association and DNA binding. In terms of tissue distribution, ubiquitous.

The protein localises to the nucleus. Its function is as follows. Stimulates the transcription of various genes by recognizing and binding to a CCAAT motif in promoters. The polypeptide is Nuclear transcription factor Y subunit C-3 (NFYC3) (Arabidopsis thaliana (Mouse-ear cress)).